The primary structure comprises 542 residues: CTP synthase (542 aa).

The segment at 1–265 is amidoligase domain; it reads MTKFVFVTGG…DEIVCHKLNL (265 aa). Residue Ser13 participates in CTP binding. UTP is bound at residue Ser13. ATP-binding positions include 14 to 19 and Asp71; that span reads SLGKGI. Residues Asp71 and Glu139 each coordinate Mg(2+). CTP is bound by residues 146 to 148, 186 to 191, and Lys222; these read DIE and KTKPTQ. UTP is bound by residues 186-191 and Lys222; that span reads KTKPTQ. Positions 290–542 constitute a Glutamine amidotransferase type-1 domain; that stretch reads NVAFVGKYVD…IAAALANRKA (253 aa). Gly351 contributes to the L-glutamine binding site. The Nucleophile; for glutamine hydrolysis role is filled by Cys378. L-glutamine-binding positions include 379-382, Glu402, and Arg468; that span reads LGMQ. Catalysis depends on residues His515 and Glu517.

Belongs to the CTP synthase family. In terms of assembly, homotetramer.

It carries out the reaction UTP + L-glutamine + ATP + H2O = CTP + L-glutamate + ADP + phosphate + 2 H(+). The enzyme catalyses L-glutamine + H2O = L-glutamate + NH4(+). The catalysed reaction is UTP + NH4(+) + ATP = CTP + ADP + phosphate + 2 H(+). It participates in pyrimidine metabolism; CTP biosynthesis via de novo pathway; CTP from UDP: step 2/2. Allosterically activated by GTP, when glutamine is the substrate; GTP has no effect on the reaction when ammonia is the substrate. The allosteric effector GTP functions by stabilizing the protein conformation that binds the tetrahedral intermediate(s) formed during glutamine hydrolysis. Inhibited by the product CTP, via allosteric rather than competitive inhibition. Catalyzes the ATP-dependent amination of UTP to CTP with either L-glutamine or ammonia as the source of nitrogen. Regulates intracellular CTP levels through interactions with the four ribonucleotide triphosphates. This chain is CTP synthase, found in Methylobacillus flagellatus (strain ATCC 51484 / DSM 6875 / VKM B-1610 / KT).